Consider the following 80-residue polypeptide: Omega-conotoxin-like 2/7 (80 aa).

An N-terminal signal peptide occupies residues 1-22; the sequence is MKLTCMMIVAVMFLTASIFITA. Positions 23–51 are excised as a propeptide; it reads DNSRNGIENLPRMRRHEMKKPKASKLNKR. 3 cysteine pairs are disulfide-bonded: C53/C71, C60/C75, and C70/C79.

This sequence belongs to the conotoxin O1 superfamily. In terms of tissue distribution, expressed by the venom duct.

The protein resides in the secreted. Functionally, omega-conotoxins act at presynaptic membranes, they bind and block voltage-gated calcium channels (Cav). In Conus imperialis (Imperial cone), this protein is Omega-conotoxin-like 2/7.